Reading from the N-terminus, the 366-residue chain is Peptide chain release factor 2 (366 aa).

N5-methylglutamine is present on Gln-253.

The protein belongs to the prokaryotic/mitochondrial release factor family. In terms of processing, methylated by PrmC. Methylation increases the termination efficiency of RF2.

Its subcellular location is the cytoplasm. In terms of biological role, peptide chain release factor 2 directs the termination of translation in response to the peptide chain termination codons UGA and UAA. The protein is Peptide chain release factor 2 of Yersinia pestis.